The following is an 89-amino-acid chain: Signal recognition particle 19 kDa protein (89 aa).

The protein belongs to the SRP19 family. Part of the signal recognition particle protein translocation system, which is composed of SRP and FtsY. Archaeal SRP consists of a 7S RNA molecule of 300 nucleotides and two protein subunits: SRP54 and SRP19.

The protein resides in the cytoplasm. Its function is as follows. Involved in targeting and insertion of nascent membrane proteins into the cytoplasmic membrane. Binds directly to 7S RNA and mediates binding of the 54 kDa subunit of the SRP. This is Signal recognition particle 19 kDa protein from Methanobrevibacter smithii (strain ATCC 35061 / DSM 861 / OCM 144 / PS).